Here is a 161-residue protein sequence, read N- to C-terminus: Ribonuclease H (161 aa).

The RNase H type-1 domain occupies 11–152 (GPRPVVIHTD…ADQLARDGLT (142 aa)). The Mg(2+) site is built by aspartate 20, glutamate 58, aspartate 80, and aspartate 144. The tract at residues 137 to 161 (HDENERADQLARDGLTENRMKSRIG) is disordered.

The protein belongs to the RNase H family. As to quaternary structure, monomer. The cofactor is Mg(2+).

It localises to the cytoplasm. It carries out the reaction Endonucleolytic cleavage to 5'-phosphomonoester.. Endonuclease that specifically degrades the RNA of RNA-DNA hybrids. The sequence is that of Ribonuclease H from Rhodopseudomonas palustris (strain HaA2).